The chain runs to 148 residues: Deoxyuridine 5'-triphosphate nucleotidohydrolase (148 aa).

Residues 68 to 70 (RSG), N81, 85 to 87 (TID), and K95 each bind substrate.

It belongs to the dUTPase family. Requires Mg(2+) as cofactor.

The enzyme catalyses dUTP + H2O = dUMP + diphosphate + H(+). The protein operates within pyrimidine metabolism; dUMP biosynthesis; dUMP from dCTP (dUTP route): step 2/2. This enzyme is involved in nucleotide metabolism: it produces dUMP, the immediate precursor of thymidine nucleotides and it decreases the intracellular concentration of dUTP so that uracil cannot be incorporated into DNA. This chain is Deoxyuridine 5'-triphosphate nucleotidohydrolase, found in Rickettsia massiliae (strain Mtu5).